A 363-amino-acid chain; its full sequence is Protein U2 (363 aa).

Positions 1–18 are cleaved as a signal peptide; sequence MFCRSPFLGISSWSLASA.

The protein is Protein U2 (U2) of Homo sapiens (Human).